The sequence spans 593 residues: ABC1 family protein lscO (593 aa).

Disordered stretches follow at residues 1-29 (MDVAFPGMERHDEKNPPGDDGTKPTGGKK) and 441-467 (PYKNPSSSDDESGESWQRTKETPEERK). Basic and acidic residues-rich tracts occupy residues 8–22 (MERHDEKNPPGDDGT) and 457–467 (QRTKETPEERK).

It belongs to the protein kinase superfamily. ADCK protein kinase family.

ABC1 family protein; part of the gene cluster that mediates the biosynthesis of the lipopeptide antibiotics leucinostatins that show extensive biological activities, including antimalarial, antiviral, antibacterial, antifungal, and antitumor activities, as well as phytotoxic. The function of lcsO within the leucinostatins biosynthesis has not been identified yet. This is ABC1 family protein lscO from Purpureocillium lilacinum (Paecilomyces lilacinus).